We begin with the raw amino-acid sequence, 1496 residues long: Chromosome partition protein MukB (1496 aa).

An ATP-binding site is contributed by Gly-63–Ser-70. Coiled coils occupy residues Lys-328 to Ser-493, Lys-536 to Trp-632, Arg-808 to Arg-832, Asn-861 to Glu-1171, and Ile-1235 to Ile-1291. The tract at residues Pro-694–Arg-811 is flexible hinge. Residues Arg-1082–Gln-1091 show a composition bias toward basic and acidic residues. The interval Arg-1082–Lys-1101 is disordered.

It belongs to the SMC family. MukB subfamily. In terms of assembly, homodimerization via its hinge domain. Binds to DNA via its C-terminal region. Interacts, and probably forms a ternary complex, with MukE and MukF via its C-terminal region. The complex formation is stimulated by calcium or magnesium. Interacts with tubulin-related protein FtsZ.

Its subcellular location is the cytoplasm. It localises to the nucleoid. Functionally, plays a central role in chromosome condensation, segregation and cell cycle progression. Functions as a homodimer, which is essential for chromosome partition. Involved in negative DNA supercoiling in vivo, and by this means organize and compact chromosomes. May achieve or facilitate chromosome segregation by condensation DNA from both sides of a centrally located replisome during cell division. The protein is Chromosome partition protein MukB of Actinobacillus pleuropneumoniae serotype 5b (strain L20).